The sequence spans 333 residues: Galactinol synthase 5 (333 aa).

Lysine 103 is a catalytic residue. Mn(2+)-binding residues include aspartate 119, aspartate 121, and histidine 257.

Belongs to the glycosyltransferase 8 family. Galactosyltransferase subfamily. A divalent metal cation serves as cofactor.

The protein localises to the cytoplasm. The catalysed reaction is myo-inositol + UDP-alpha-D-galactose = alpha-D-galactosyl-(1-&gt;3)-1D-myo-inositol + UDP + H(+). Galactinol synthase involved in the biosynthesis of raffinose family oligosaccharides (RFOs) that function as osmoprotectants. May promote plant stress tolerance. This Arabidopsis thaliana (Mouse-ear cress) protein is Galactinol synthase 5 (GOLS5).